The sequence spans 249 residues: Proteasome subunit alpha type-4 (249 aa).

It belongs to the peptidase T1A family. The 26S proteasome consists of a 20S proteasome core and two 19S regulatory subunits. The 20S proteasome core is composed of 28 subunits that are arranged in four stacked rings, resulting in a barrel-shaped structure. The two end rings are each formed by seven alpha subunits, and the two central rings are each formed by seven beta subunits. The catalytic chamber with the active sites is on the inside of the barrel.

The protein localises to the cytoplasm. The protein resides in the nucleus. The proteasome is a multicatalytic proteinase complex which is characterized by its ability to cleave peptides with Arg, Phe, Tyr, Leu, and Glu adjacent to the leaving group at neutral or slightly basic pH. The proteasome has an ATP-dependent proteolytic activity. The protein is Proteasome subunit alpha type-4 (PAC1) of Petunia hybrida (Petunia).